We begin with the raw amino-acid sequence, 259 residues long: Peroxisomal membrane protein 11B (259 aa).

Lys-43 carries the N6-acetyllysine modification. The disordered stretch occupies residues 157-176; the sequence is LKGSGGGVPGGSETGGLGGP. A compositionally biased stretch (gly residues) spans 159–176; the sequence is GSGGGVPGGSETGGLGGP. Residues 211–259 form an interaction with PEX19, PEX11G and FIS1 and peroxisome targeting region; that stretch reads VVRNACDLFIPLDKLGLWRCGPGIVGLCGLVSSILSILTLIYPWLRLKP. Residues 233 to 255 form a helical membrane-spanning segment; the sequence is GIVGLCGLVSSILSILTLIYPWL.

It belongs to the peroxin-11 family. As to quaternary structure, homodimer. Heterodimer with PEX11G. Interacts with PEX19. Interacts with FIS1.

The protein localises to the peroxisome membrane. Functionally, involved in peroxisomal proliferation. May regulate peroxisome division by recruiting the dynamin-related GTPase DNM1L to the peroxisomal membrane. Promotes membrane protrusion and elongation on the peroxisomal surface. This chain is Peroxisomal membrane protein 11B (PEX11B), found in Homo sapiens (Human).